The following is a 711-amino-acid chain: C-Jun-amino-terminal kinase-interacting protein 1 (711 aa).

The interval Met-1–Ile-27 is disordered. Low complexity predominate over residues Ala-14–Leu-25. Residues Ser-15, Ser-29, and Ser-40 each carry the phosphoserine modification. The disordered stretch occupies residues Ala-78–Thr-371. Residue Thr-103 is modified to Phosphothreonine; by MAPK8, MAPK9 and MAPK10. The span at Gly-105–Glu-116 shows a compositional bias: acidic residues. Residues Pro-127–Pro-285 form a JNK-binding domain (JBD) region. Low complexity predominate over residues Gly-139–Gly-149. A Phosphoserine modification is found at Ser-152. Positions Arg-157 to Thr-176 are minimal inhibitory domain (MID). Polar residues predominate over residues Thr-162–Leu-182. A phosphoserine mark is found at Ser-181, Ser-187, Ser-193, Ser-195, and Ser-196. A compositionally biased stretch (polar residues) spans Arg-194–Gln-204. A Phosphothreonine; by MAPK8, MAPK9 and MAPK10 modification is found at Thr-205. Phosphoserine is present on Ser-214. A compositionally biased stretch (polar residues) spans Asp-228–Gln-244. Basic and acidic residues predominate over residues Ile-267–Ala-277. The segment at Leu-283–Ser-471 is interaction with MAP3K7. 9 positions are modified to phosphoserine: Ser-311, Ser-328, Ser-330, Ser-340, Ser-355, Ser-366, Ser-369, Ser-407, and Ser-409. Short sequence motifs (D-box) lie at residues Arg-353–Pro-360 and Arg-364–Ser-372. Position 411 is a phosphothreonine (Thr-411). The interval Glu-429–Glu-451 is disordered. 2 positions are modified to phosphoserine: Ser-444 and Ser-447. Phosphothreonine is present on Thr-448. Residues Ser-469, Ser-471, Ser-472, and Ser-473 each carry the phosphoserine modification. Positions Ser-471 to Ile-660 are interaction with VRK2. An SH3 domain is found at Glu-488–Lys-549. In terms of domain architecture, PID spans Ser-561–Glu-700.

It belongs to the JIP scaffold family. In terms of assembly, forms homo- or heterooligomeric complexes. Binds specific components of the JNK signaling pathway namely, MAPK8/JNK1, MAPK9/JNK2, MAPK10/JNK3, MAP2K7/MKK7, MAP3K11/MLK3 and DLK1. Also binds the proline-rich domain-containing splice variant of apolipoprotein E receptor 2 (ApoER2). Interacts, via the PID domain, with ARHGEF28. Binds the cytoplasmic tails of LRP1 and LRP2 (Megalin). Binds the TPR motif-containing C-terminal of KNS2, then the pre-assembled MAPK8IP1 scaffolding complexes are transported as a cargo of kinesin, to the required subcellular location. Interacts with the cytoplasmic domain of APP. Interacts with DCLK2. Interacts with MAP3K7/TAK1. Interacts with isoform 1 and isoform 2 of VRK2. Found in a complex with SH3RF1, RAC1, MAP3K11/MLK3, MAP2K7/MKK7 and MAPK8/JNK1. Found in a complex with SH3RF1, RAC2, MAP3K7/TAK1, MAP2K7/MKK7, MAPK8/JNK1 and MAPK9/JNK2. Interacts with SH3RF2. Phosphorylated by MAPK8, MAPK9 and MAPK10. Phosphorylation on Thr-103 is also necessary for the dissociation and activation of MAP3K12. Phosphorylated by isoform 1 and isoform 2 of VRK2. Hyperphosphorylated during mitosis following activation of stress-activated and MAP kinases. In terms of processing, ubiquitinated. Two preliminary events are required to prime for ubiquitination; phosphorylation and an increased in intracellular calcium concentration. Then, the calcium influx initiates ubiquitination and degradation by the ubiquitin-proteasome pathway. In terms of tissue distribution, highly expressed in brain. Expressed in neurons, localizing to neurite tips in differentiating cells. Also expressed in the pancreas, testis and prostate. Low levels in heart, ovary and small intestine. Decreased levels in pancreatic beta cells sensitize cells to IL-1-beta-induced apoptosis.

Its subcellular location is the cytoplasm. The protein resides in the perinuclear region. It localises to the nucleus. It is found in the endoplasmic reticulum membrane. The protein localises to the mitochondrion membrane. Functionally, the JNK-interacting protein (JIP) group of scaffold proteins selectively mediates JNK signaling by aggregating specific components of the MAPK cascade to form a functional JNK signaling module. Required for JNK activation in response to excitotoxic stress. Cytoplasmic MAPK8IP1 causes inhibition of JNK-regulated activity by retaining JNK in the cytoplasm and inhibiting JNK phosphorylation of c-Jun. May also participate in ApoER2-specific reelin signaling. Directly, or indirectly, regulates GLUT2 gene expression and beta-cell function. Appears to have a role in cell signaling in mature and developing nerve terminals. May function as a regulator of vesicle transport, through interactions with the JNK-signaling components and motor proteins. Functions as an anti-apoptotic protein and whose level seems to influence the beta-cell death or survival response. Acts as a scaffold protein that coordinates with SH3RF1 in organizing different components of the JNK pathway, including RAC1 or RAC2, MAP3K11/MLK3 or MAP3K7/TAK1, MAP2K7/MKK7, MAPK8/JNK1 and/or MAPK9/JNK2 into a functional multiprotein complex to ensure the effective activation of the JNK signaling pathway. Regulates the activation of MAPK8/JNK1 and differentiation of CD8(+) T-cells. The sequence is that of C-Jun-amino-terminal kinase-interacting protein 1 (MAPK8IP1) from Homo sapiens (Human).